A 463-amino-acid polypeptide reads, in one-letter code: Glutamate--tRNA ligase (463 aa).

Residues 9–19 (PSPTGYLHVGG) carry the 'HIGH' region motif. The segment covering 115-129 (AGEKPRYDGTWRPEA) has biased composition (basic and acidic residues). A disordered region spans residues 115–136 (AGEKPRYDGTWRPEAGKTLPAI). The 'KMSKS' region signature appears at 241–245 (KLSKR). Lysine 244 lines the ATP pocket.

It belongs to the class-I aminoacyl-tRNA synthetase family. Glutamate--tRNA ligase type 1 subfamily. As to quaternary structure, monomer.

Its subcellular location is the cytoplasm. The enzyme catalyses tRNA(Glu) + L-glutamate + ATP = L-glutamyl-tRNA(Glu) + AMP + diphosphate. Functionally, catalyzes the attachment of glutamate to tRNA(Glu) in a two-step reaction: glutamate is first activated by ATP to form Glu-AMP and then transferred to the acceptor end of tRNA(Glu). In Janthinobacterium sp. (strain Marseille) (Minibacterium massiliensis), this protein is Glutamate--tRNA ligase.